Consider the following 457-residue polypeptide: Bifunctional protein GlmU (457 aa).

Residues 1 to 230 are pyrophosphorylase; the sequence is MLNVVILAAG…SWETLGVNSR (230 aa). UDP-N-acetyl-alpha-D-glucosamine is bound by residues 7–10, Lys-21, Gln-73, 78–79, 104–106, Gly-140, Glu-155, Asn-170, and Asn-228; these read LAAG, GT, and YGD. Asp-106 serves as a coordination point for Mg(2+). Position 228 (Asn-228) interacts with Mg(2+). The interval 231-251 is linker; sequence VQQAQLERAWQSELARRQLEA. The tract at residues 252-457 is N-acetyltransferase; that stretch reads GVTLADPARF…EGWKRPVKKS (206 aa). UDP-N-acetyl-alpha-D-glucosamine contacts are provided by Arg-334 and Lys-352. His-364 (proton acceptor) is an active-site residue. UDP-N-acetyl-alpha-D-glucosamine is bound by residues Tyr-367 and Asn-378. Acetyl-CoA is bound by residues Ala-381, 387-388, Ser-406, Ala-424, and Arg-441; that span reads NY.

In the N-terminal section; belongs to the N-acetylglucosamine-1-phosphate uridyltransferase family. This sequence in the C-terminal section; belongs to the transferase hexapeptide repeat family. In terms of assembly, homotrimer. Mg(2+) serves as cofactor.

The protein resides in the cytoplasm. It carries out the reaction alpha-D-glucosamine 1-phosphate + acetyl-CoA = N-acetyl-alpha-D-glucosamine 1-phosphate + CoA + H(+). It catalyses the reaction N-acetyl-alpha-D-glucosamine 1-phosphate + UTP + H(+) = UDP-N-acetyl-alpha-D-glucosamine + diphosphate. The protein operates within nucleotide-sugar biosynthesis; UDP-N-acetyl-alpha-D-glucosamine biosynthesis; N-acetyl-alpha-D-glucosamine 1-phosphate from alpha-D-glucosamine 6-phosphate (route II): step 2/2. It functions in the pathway nucleotide-sugar biosynthesis; UDP-N-acetyl-alpha-D-glucosamine biosynthesis; UDP-N-acetyl-alpha-D-glucosamine from N-acetyl-alpha-D-glucosamine 1-phosphate: step 1/1. Its pathway is bacterial outer membrane biogenesis; LPS lipid A biosynthesis. In terms of biological role, catalyzes the last two sequential reactions in the de novo biosynthetic pathway for UDP-N-acetylglucosamine (UDP-GlcNAc). The C-terminal domain catalyzes the transfer of acetyl group from acetyl coenzyme A to glucosamine-1-phosphate (GlcN-1-P) to produce N-acetylglucosamine-1-phosphate (GlcNAc-1-P), which is converted into UDP-GlcNAc by the transfer of uridine 5-monophosphate (from uridine 5-triphosphate), a reaction catalyzed by the N-terminal domain. The polypeptide is Bifunctional protein GlmU (Bordetella bronchiseptica (strain ATCC BAA-588 / NCTC 13252 / RB50) (Alcaligenes bronchisepticus)).